The following is a 554-amino-acid chain: Arginine--tRNA ligase (554 aa).

The 'HIGH' region signature appears at 132–142; sequence ANPTGPIHLGG.

The protein belongs to the class-I aminoacyl-tRNA synthetase family. As to quaternary structure, monomer.

The protein localises to the cytoplasm. It catalyses the reaction tRNA(Arg) + L-arginine + ATP = L-arginyl-tRNA(Arg) + AMP + diphosphate. This is Arginine--tRNA ligase from Clavibacter sepedonicus (Clavibacter michiganensis subsp. sepedonicus).